The primary structure comprises 217 residues: Glycosylphosphatidylinositol anchor biosynthesis protein 11 (217 aa).

A run of 6 helical transmembrane segments spans residues 45-61, 74-94, 111-131, 138-158, 169-189, and 195-215; these read TWQTIPFHLIVLSYWFI, WLLVPCQVLYLALQFNPATVY, VTCILLTIPCMLLVVLFGAPF, TWLLSLHCCVLSYPAVYSVLN, YFISIAVGCWISCLAIPLDWD, and WPIPLVVGAQLGAMFGYTFCS.

It belongs to the PIGF family.

The protein localises to the endoplasmic reticulum membrane. It functions in the pathway glycolipid biosynthesis; glycosylphosphatidylinositol-anchor biosynthesis. In terms of biological role, acts in the GPI biosynthetic pathway between GlcNAc-PI synthesis and GPI transfer to protein. In Eremothecium gossypii (strain ATCC 10895 / CBS 109.51 / FGSC 9923 / NRRL Y-1056) (Yeast), this protein is Glycosylphosphatidylinositol anchor biosynthesis protein 11 (GPI11).